Reading from the N-terminus, the 266-residue chain is 4-hydroxy-tetrahydrodipicolinate reductase (266 aa).

NAD(+) is bound by residues G8–M13 and E33. R34 lines the NADP(+) pocket. NAD(+)-binding positions include G97–T99 and A121–M124. H154 serves as the catalytic Proton donor/acceptor. Residue H155 participates in (S)-2,3,4,5-tetrahydrodipicolinate binding. K158 (proton donor) is an active-site residue. Residue G164–T165 participates in (S)-2,3,4,5-tetrahydrodipicolinate binding.

Belongs to the DapB family.

The protein resides in the cytoplasm. The catalysed reaction is (S)-2,3,4,5-tetrahydrodipicolinate + NAD(+) + H2O = (2S,4S)-4-hydroxy-2,3,4,5-tetrahydrodipicolinate + NADH + H(+). The enzyme catalyses (S)-2,3,4,5-tetrahydrodipicolinate + NADP(+) + H2O = (2S,4S)-4-hydroxy-2,3,4,5-tetrahydrodipicolinate + NADPH + H(+). The protein operates within amino-acid biosynthesis; L-lysine biosynthesis via DAP pathway; (S)-tetrahydrodipicolinate from L-aspartate: step 4/4. Its function is as follows. Catalyzes the conversion of 4-hydroxy-tetrahydrodipicolinate (HTPA) to tetrahydrodipicolinate. The sequence is that of 4-hydroxy-tetrahydrodipicolinate reductase from Geobacter metallireducens (strain ATCC 53774 / DSM 7210 / GS-15).